A 429-amino-acid polypeptide reads, in one-letter code: UPF0597 protein GSU1527 (429 aa).

The protein belongs to the UPF0597 family.

The polypeptide is UPF0597 protein GSU1527 (Geobacter sulfurreducens (strain ATCC 51573 / DSM 12127 / PCA)).